The following is a 229-amino-acid chain: Putative N-acetylmannosamine-6-phosphate 2-epimerase (229 aa).

Belongs to the NanE family.

The catalysed reaction is an N-acyl-D-glucosamine 6-phosphate = an N-acyl-D-mannosamine 6-phosphate. The protein operates within amino-sugar metabolism; N-acetylneuraminate degradation; D-fructose 6-phosphate from N-acetylneuraminate: step 3/5. Its function is as follows. Converts N-acetylmannosamine-6-phosphate (ManNAc-6-P) to N-acetylglucosamine-6-phosphate (GlcNAc-6-P). The protein is Putative N-acetylmannosamine-6-phosphate 2-epimerase of Actinobacillus pleuropneumoniae serotype 5b (strain L20).